A 363-amino-acid chain; its full sequence is 3-dehydroquinate synthase (363 aa).

NAD(+) is bound by residues threonine 134–threonine 135, lysine 147, and lysine 156. Residues glutamate 189, histidine 254, and histidine 271 each coordinate Zn(2+).

It belongs to the sugar phosphate cyclases superfamily. Dehydroquinate synthase family. The cofactor is Co(2+). Requires Zn(2+) as cofactor. It depends on NAD(+) as a cofactor.

Its subcellular location is the cytoplasm. The catalysed reaction is 7-phospho-2-dehydro-3-deoxy-D-arabino-heptonate = 3-dehydroquinate + phosphate. The protein operates within metabolic intermediate biosynthesis; chorismate biosynthesis; chorismate from D-erythrose 4-phosphate and phosphoenolpyruvate: step 2/7. Catalyzes the conversion of 3-deoxy-D-arabino-heptulosonate 7-phosphate (DAHP) to dehydroquinate (DHQ). This is 3-dehydroquinate synthase from Prochlorococcus marinus (strain MIT 9312).